Here is a 459-residue protein sequence, read N- to C-terminus: RuvB-like helicase 1 (459 aa).

Residue 75 to 82 (GGPSTGKT) participates in ATP binding.

The protein belongs to the RuvB family. As to quaternary structure, may form heterododecamers with RVB2. Component of the SWR1 chromatin remodeling complex, the INO80 chromatin remodeling complex, and of the R2TP complex.

It is found in the nucleus. It carries out the reaction ATP + H2O = ADP + phosphate + H(+). Its function is as follows. DNA helicase which participates in several chromatin remodeling complexes, including the SWR1 and the INO80 complexes. The SWR1 complex mediates the ATP-dependent exchange of histone H2A for the H2A variant HZT1 leading to transcriptional regulation of selected genes by chromatin remodeling. The INO80 complex remodels chromatin by shifting nucleosomes and is involved in DNA repair. Also involved in pre-rRNA processing. This chain is RuvB-like helicase 1 (RVB1), found in Eremothecium gossypii (strain ATCC 10895 / CBS 109.51 / FGSC 9923 / NRRL Y-1056) (Yeast).